Here is a 172-residue protein sequence, read N- to C-terminus: Protein-export protein SecB (172 aa).

The protein belongs to the SecB family. As to quaternary structure, homotetramer, a dimer of dimers. One homotetramer interacts with 1 SecA dimer.

The protein resides in the cytoplasm. In terms of biological role, one of the proteins required for the normal export of preproteins out of the cell cytoplasm. It is a molecular chaperone that binds to a subset of precursor proteins, maintaining them in a translocation-competent state. It also specifically binds to its receptor SecA. The sequence is that of Protein-export protein SecB from Haemophilus ducreyi (strain 35000HP / ATCC 700724).